A 508-amino-acid chain; its full sequence is Histone acetyltransferase type B catalytic subunit (508 aa).

Interaction with histone H4 N-terminus stretches follow at residues 44-46 (EKE) and 207-209 (YRY). Acetyl-CoA is bound by residues 249 to 251 (FII) and 256 to 262 (QQKGLGS). Glu284 serves as the catalytic Proton donor/acceptor. Disordered regions lie at residues 364 to 399 (SVRPGLGAPEDEDYEEQSGRSKSKGHEKALPKPTPE) and 461 to 508 (QADG…SGHA). The segment covering 387–399 (KGHEKALPKPTPE) has biased composition (basic and acidic residues).

It belongs to the HAT1 family. As to quaternary structure, component of the HAT-B complex composed of at least hat-1 and hat-2. The HAT-B complex binds to histone H4 tail.

It is found in the cytoplasm. The protein resides in the nucleus. It carries out the reaction L-lysyl-[protein] + acetyl-CoA = N(6)-acetyl-L-lysyl-[protein] + CoA + H(+). Functionally, catalytic component of the histone acetylase B (HAT-B) complex. Acetylates 'Lys-12' of histone H4 which is required for telomeric silencing. Has intrinsic substrate specificity that modifies lysine in recognition sequence GXGKXG. Involved in DNA double-strand break repair. The polypeptide is Histone acetyltransferase type B catalytic subunit (hat-1) (Neurospora crassa (strain ATCC 24698 / 74-OR23-1A / CBS 708.71 / DSM 1257 / FGSC 987)).